The following is a 211-amino-acid chain: 5,6-dimethylbenzimidazole synthase (211 aa).

Residues 22 to 26, Ser-50, Leu-99, and Ser-158 contribute to the FMN site; that span reads RRDVR.

It belongs to the BluB family. Homooctamer.

It catalyses the reaction FMNH2 + O2 = dialurate + 5,6-dimethylbenzimidazole + D-erythrose 4-phosphate + H(+). Functionally, involved in the biosynthesis of cobalamin (vitamin B12). Catalyzes the oxidative fragmentation and contraction of the isoalloxazine heterocycle and the cleavage of the ribityl tail of FMNH(2) to form 5,6-dimethylbenzimidazole (DMB) and D-erythrose 4-phosphate (E4P). NAD(P)H is only required initially to reduce FMN and oxygen drives the oxidative fragmentation. This is 5,6-dimethylbenzimidazole synthase from Rhodospirillum rubrum (strain ATCC 11170 / ATH 1.1.1 / DSM 467 / LMG 4362 / NCIMB 8255 / S1).